A 323-amino-acid chain; its full sequence is O-phosphoserine sulfhydrylase (323 aa).

Lys51 is subject to N6-(pyridoxal phosphate)lysine. Residues Asn81 and 184–188 each bind pyridoxal 5'-phosphate; that span reads GTTGT. Arg220 contacts substrate. Pyridoxal 5'-phosphate is bound at residue Ser265.

Belongs to the cysteine synthase/cystathionine beta-synthase family. In terms of assembly, homodimer. Pyridoxal 5'-phosphate is required as a cofactor.

It carries out the reaction [CysO sulfur-carrier protein]-C-terminal-Gly-aminoethanethioate + O-phospho-L-serine + H(+) = [CysO sulfur-carrier protein]-Gly-NH-CH2-C(O)-S-L-Cys + phosphate. It participates in amino-acid biosynthesis; L-cysteine biosynthesis. Its function is as follows. Catalyzes the formation of a covalent CysO-cysteine adduct via a sulfur transfer, using the thiocarboxylated sulfur carrier protein CysO-COSH as sulfur donor and O-phospho-L-serine (OPS) as sulfur acceptor. Can also use sodium sulfide as sulfur donor in vitro, albeit with less efficiency. The sequence is that of O-phosphoserine sulfhydrylase (cysM) from Mycobacterium bovis (strain ATCC BAA-935 / AF2122/97).